The primary structure comprises 493 residues: 3-octaprenyl-4-hydroxybenzoate carboxy-lyase (493 aa).

Asparagine 172 provides a ligand contact to Mn(2+). Residues 175–177 (IYR), 189–191 (RWL), and 194–195 (RG) each bind prenylated FMN. Glutamate 238 is a binding site for Mn(2+). Aspartate 287 acts as the Proton donor in catalysis.

Belongs to the UbiD family. In terms of assembly, homohexamer. The cofactor is prenylated FMN. Requires Mn(2+) as cofactor.

The protein localises to the cell membrane. It carries out the reaction a 4-hydroxy-3-(all-trans-polyprenyl)benzoate + H(+) = a 2-(all-trans-polyprenyl)phenol + CO2. It functions in the pathway cofactor biosynthesis; ubiquinone biosynthesis. Functionally, catalyzes the decarboxylation of 3-octaprenyl-4-hydroxy benzoate to 2-octaprenylphenol, an intermediate step in ubiquinone biosynthesis. In Shewanella sp. (strain ANA-3), this protein is 3-octaprenyl-4-hydroxybenzoate carboxy-lyase.